Reading from the N-terminus, the 349-residue chain is Succinylglutamate desuccinylase (349 aa).

The Zn(2+) site is built by H70, E73, and H166. E229 is an active-site residue.

This sequence belongs to the AspA/AstE family. Succinylglutamate desuccinylase subfamily. Zn(2+) is required as a cofactor.

It carries out the reaction N-succinyl-L-glutamate + H2O = L-glutamate + succinate. Its pathway is amino-acid degradation; L-arginine degradation via AST pathway; L-glutamate and succinate from L-arginine: step 5/5. In terms of biological role, transforms N(2)-succinylglutamate into succinate and glutamate. The chain is Succinylglutamate desuccinylase from Burkholderia thailandensis (strain ATCC 700388 / DSM 13276 / CCUG 48851 / CIP 106301 / E264).